A 595-amino-acid chain; its full sequence is P2X purinoceptor 7 (595 aa).

Over 1–22 (MPACCSWNDVLQYETNKVTRIQ) the chain is Cytoplasmic. C4 carries S-palmitoyl cysteine lipidation. The chain crosses the membrane as a helical span at residues 23–46 (STNYGTVKWVLHMIVFSYISFALV). Over 47 to 328 (SDKLYQRKEP…ILVFGTGGKF (282 aa)) the chain is Extracellular. N-linked (GlcNAc...) asparagine glycosylation is present at N74. Disulfide bonds link C119–C168, C129–C152, and C135–C162. ADP-ribosylarginine; by ART2B occurs at positions 125 and 133. N187 carries N-linked (GlcNAc...) asparagine glycosylation. T189 is an ATP binding site. 2 N-linked (GlcNAc...) asparagine glycosylation sites follow: N202 and N213. C216 and C226 are joined by a disulfide. A glycan (N-linked (GlcNAc...) asparagine) is linked at N241. An intrachain disulfide couples C260 to C269. ATP contacts are provided by R294 and K311. A helical transmembrane segment spans residues 329 to 353 (DIIQLVVYIGSTLSYFGLATVCIDL). Position 342 (S342) interacts with Na(+). Residues 354–595 (LINTYSSAFC…GQYSGFKYPY (242 aa)) lie on the Cytoplasmic side of the membrane. The interval 360 to 377 (SAFCRSGVYPYCKCCEPC) is C-cys anchor. S-palmitoyl cysteine attachment occurs at residues C363, C374, and C377. S390 is subject to Phosphoserine. The tract at residues 395 to 595 (KPTLKYVSFV…GQYSGFKYPY (201 aa)) is cytoplasmic ballast. Zn(2+) is bound by residues C479, C499, and C506. Residues R546, H547, Y550, and A567 each contribute to the GTP site. C572 is a Zn(2+) binding site. GTP is bound by residues K583, S589, and G590.

This sequence belongs to the P2X receptor family. In terms of assembly, homotrimers. Interacts with LAMA3, ITGB2, ACTB, ACTN4, SVIL, MPP3, HSPA1, HSPCB, HSPA8, PIK230 and PTPRB. Interacts (via C-terminus) with EMP2. Phosphorylation results in its inactivation. In terms of processing, ADP-ribosylation at Arg-125 is necessary and sufficient to activate P2RX7 and gate the channel. Post-translationally, palmitoylation of several cysteines in the C-terminal cytoplasmic tail is required for efficient localization to cell surface. Palmitoylation prevents channel desensitization by physically anchoring the palmitoylated groups to the membrane.

The protein resides in the cell membrane. The enzyme catalyses Ca(2+)(in) = Ca(2+)(out). It carries out the reaction K(+)(in) = K(+)(out). It catalyses the reaction Na(+)(in) = Na(+)(out). With respect to regulation, activated by high extracellular ATP levels (0.1-2.5 mM). The synthetic analog 2'(3')-O-(4-benzoylbenzoyl)ATP (BzATP) acts as a potent agonist. Does not undergo desensitization, instead, undergoes a facilitation process where currents progressively increase with repetitive or prolonged agonist application. Palmitoylation prevents channel desensitization. The permeability of the P2RX7 channel is modulated by the amount of cholesterol in the plasma membrane. In terms of biological role, ATP-gated nonselective transmembrane cation channel. Requires high millimolar-range concentrations of ATP to become activated. ATP binding trigers the rapid opening of the channel and allows Na(+) and Ca(2+) influx and K(+) efflux. Has also the ability to form a large pore in the cell membrane, allowing the passage of large cationic molecules. In microglia, may mediate NADPH transport across the plasma membrane. In immune cells, P2RX7 acts as a molecular sensor in pathological inflammatory states by detecting and responding to high local concentrations of extracellar ATP. In microglial cells, P2RX7 activation leads to the release of pro-inflammatory cytokines, such as IL-1beta and IL-18, through the activation of the NLRP3 inflammasome and caspase-1. Cooperates with KCNK6 to activate NLRP3 inflammasome. Activates death pathways leading to apoptosis and autophagy. Activates death pathways leading to pyroptosis. The chain is P2X purinoceptor 7 (P2rx7) from Mus musculus (Mouse).